Consider the following 473-residue polypeptide: Photosystem II CP43 reaction center protein (473 aa).

Positions 1 to 14 (MKTLYSLRRYFHVE) are excised as a propeptide. Position 15 is an N-acetylthreonine (Thr15). Phosphothreonine is present on Thr15. 5 helical membrane-spanning segments follow: residues 69 to 93 (LFEV…PHLA), 134 to 155 (LIGP…KDKN), 178 to 200 (KAMY…RVIS), 255 to 275 (KPFA…LSYS), and 291 to 312 (WFNN…ASQA). Glu367 is a binding site for [CaMn4O5] cluster. Residues 447–471 (RARAAAAGFEKGIDRDTEPVLSMRP) form a helical membrane-spanning segment.

It belongs to the PsbB/PsbC family. PsbC subfamily. In terms of assembly, PSII is composed of 1 copy each of membrane proteins PsbA, PsbB, PsbC, PsbD, PsbE, PsbF, PsbH, PsbI, PsbJ, PsbK, PsbL, PsbM, PsbT, PsbX, PsbY, PsbZ, Psb30/Ycf12, at least 3 peripheral proteins of the oxygen-evolving complex and a large number of cofactors. It forms dimeric complexes. Binds multiple chlorophylls and provides some of the ligands for the Ca-4Mn-5O cluster of the oxygen-evolving complex. It may also provide a ligand for a Cl- that is required for oxygen evolution. PSII binds additional chlorophylls, carotenoids and specific lipids. serves as cofactor.

It localises to the plastid. It is found in the chloroplast thylakoid membrane. Its function is as follows. One of the components of the core complex of photosystem II (PSII). It binds chlorophyll and helps catalyze the primary light-induced photochemical processes of PSII. PSII is a light-driven water:plastoquinone oxidoreductase, using light energy to abstract electrons from H(2)O, generating O(2) and a proton gradient subsequently used for ATP formation. In Ostreococcus tauri, this protein is Photosystem II CP43 reaction center protein.